A 175-amino-acid chain; its full sequence is CEN-like protein 4 (175 aa).

The protein belongs to the phosphatidylethanolamine-binding protein family. In terms of tissue distribution, expressed in vegetative axillary meristems but not in the main shoot meristem.

It localises to the cytoplasm. Its function is as follows. May form complexes with phosphorylated ligands by interfering with kinases and their effectors. This chain is CEN-like protein 4 (CET4), found in Nicotiana tabacum (Common tobacco).